A 330-amino-acid polypeptide reads, in one-letter code: Glucokinase (330 aa).

14–19 serves as a coordination point for ATP; sequence ADIGGT.

Belongs to the bacterial glucokinase family.

Its subcellular location is the cytoplasm. The catalysed reaction is D-glucose + ATP = D-glucose 6-phosphate + ADP + H(+). The chain is Glucokinase from Colwellia psychrerythraea (strain 34H / ATCC BAA-681) (Vibrio psychroerythus).